We begin with the raw amino-acid sequence, 97 residues long: Kunitz-type trypsin inhibitor 1 (97 aa).

It belongs to the protease inhibitor I3 (leguminous Kunitz-type inhibitor) family.

In terms of biological role, exhibits Kunitz trypsin protease inhibitor activity. The polypeptide is Kunitz-type trypsin inhibitor 1 (Selenicereus costaricensis (Red-fleshed dragon fruit)).